A 304-amino-acid polypeptide reads, in one-letter code: Agmatinase (304 aa).

His-126, Asp-149, His-151, Asp-153, Asp-230, and Asp-232 together coordinate Mn(2+).

It belongs to the arginase family. Agmatinase subfamily. The cofactor is Mn(2+).

The catalysed reaction is agmatine + H2O = urea + putrescine. It participates in amine and polyamine biosynthesis; putrescine biosynthesis via agmatine pathway; putrescine from agmatine: step 1/1. Functionally, catalyzes the formation of putrescine from agmatine. This is Agmatinase from Edwardsiella ictaluri (strain 93-146).